Consider the following 230-residue polypeptide: MEEERLLEELESKLGIEFQNINLLVTALTHSSYANENKNAEYNERLEFLGDAVLQLSISEYFFKKYPTISEGELTKKRALVVCGMSLHSIGERWQLGKYIRMSHGEELTGGRTRVSIIADCVEAVIAAIYLDKGFDTAKNFILREFEGTIQNAVENKIILDYKTRLQEILQSKGKTDIKYTLVRHEGPPHRRKFFVNLNFDNDVKSTGEGYTKKDAEQDAACKALKGLDN.

The RNase III domain maps to 7–134 (LEELESKLGI…VIAAIYLDKG (128 aa)). Residue Glu-47 participates in Mg(2+) binding. Residue Asp-51 is part of the active site. Mg(2+) contacts are provided by Asp-120 and Glu-123. The active site involves Glu-123. A DRBM domain is found at 161-230 (DYKTRLQEIL…ACKALKGLDN (70 aa)).

Belongs to the ribonuclease III family. As to quaternary structure, homodimer. The cofactor is Mg(2+).

The protein resides in the cytoplasm. The catalysed reaction is Endonucleolytic cleavage to 5'-phosphomonoester.. Its function is as follows. Digests double-stranded RNA. Involved in the processing of primary rRNA transcript to yield the immediate precursors to the large and small rRNAs (23S and 16S). Processes some mRNAs, and tRNAs when they are encoded in the rRNA operon. Processes pre-crRNA and tracrRNA of type II CRISPR loci if present in the organism. The polypeptide is Ribonuclease 3 (Clostridium acetobutylicum (strain ATCC 824 / DSM 792 / JCM 1419 / IAM 19013 / LMG 5710 / NBRC 13948 / NRRL B-527 / VKM B-1787 / 2291 / W)).